Reading from the N-terminus, the 357-residue chain is Aspartate carbamoyltransferase catalytic subunit (357 aa).

The segment covering 1–17 (MSNSIDSQSIPTISPTD) has biased composition (polar residues). The disordered stretch occupies residues 1-21 (MSNSIDSQSIPTISPTDYTKF). 2 residues coordinate carbamoyl phosphate: Arg97 and Thr98. Lys125 is an L-aspartate binding site. The carbamoyl phosphate site is built by Arg147, His177, and Gln180. Residues Arg211 and Arg266 each coordinate L-aspartate. Gly307 and Pro308 together coordinate carbamoyl phosphate.

The protein belongs to the aspartate/ornithine carbamoyltransferase superfamily. ATCase family. In terms of assembly, heterododecamer (2C3:3R2) of six catalytic PyrB chains organized as two trimers (C3), and six regulatory PyrI chains organized as three dimers (R2).

The catalysed reaction is carbamoyl phosphate + L-aspartate = N-carbamoyl-L-aspartate + phosphate + H(+). Its pathway is pyrimidine metabolism; UMP biosynthesis via de novo pathway; (S)-dihydroorotate from bicarbonate: step 2/3. In terms of biological role, catalyzes the condensation of carbamoyl phosphate and aspartate to form carbamoyl aspartate and inorganic phosphate, the committed step in the de novo pyrimidine nucleotide biosynthesis pathway. The sequence is that of Aspartate carbamoyltransferase catalytic subunit from Psychrobacter arcticus (strain DSM 17307 / VKM B-2377 / 273-4).